The following is a 380-amino-acid chain: Chorismate synthase (380 aa).

Arg47 is a binding site for NADP(+). Residues Arg124–Ser126, Gly288, Lys303–Thr307, and Arg329 contribute to the FMN site.

The protein belongs to the chorismate synthase family. As to quaternary structure, homotetramer. FMNH2 serves as cofactor.

It catalyses the reaction 5-O-(1-carboxyvinyl)-3-phosphoshikimate = chorismate + phosphate. It participates in metabolic intermediate biosynthesis; chorismate biosynthesis; chorismate from D-erythrose 4-phosphate and phosphoenolpyruvate: step 7/7. Its function is as follows. Catalyzes the anti-1,4-elimination of the C-3 phosphate and the C-6 proR hydrogen from 5-enolpyruvylshikimate-3-phosphate (EPSP) to yield chorismate, which is the branch point compound that serves as the starting substrate for the three terminal pathways of aromatic amino acid biosynthesis. This reaction introduces a second double bond into the aromatic ring system. This Leptospira interrogans serogroup Icterohaemorrhagiae serovar copenhageni (strain Fiocruz L1-130) protein is Chorismate synthase.